Here is a 395-residue protein sequence, read N- to C-terminus: GPI-anchor transamidase (395 aa).

An N-terminal signal peptide occupies residues 1–27 (MAVTDSLSRAASTLAAVLLLSFGSVAA). Over 28 to 368 (SHIEDQAEQF…PKLKDWHPPG (341 aa)) the chain is Lumenal. The Ca(2+) site is built by D79, I82, E118, and D120. Catalysis depends on H164, which acts as the Proton donor. The active-site Nucleophile; acyl-thioester intermediate is C206. A protein-binding residues include C206, S232, and S234. The tract at residues 231–236 (DSLSHQ) is autoinhibitory loop. A disulfide bond links C275 and C280. Residues 369–385 (GFILGLWALIIMVFFKT) traverse the membrane as a helical segment. Over 386-395 (YGIKHMKFIF) the chain is Cytoplasmic.

This sequence belongs to the peptidase C13 family. Heteropentamer. Part of the GPI-anchor transamidase complex, consisting of PIGK, PIGT, PIGS, PIGU and GAA1. Interacts with GPAA1. Interacts with PIGT; this interaction, via a disulfide link, stabilizes the expression of GAA1 and PIGK and links them to PIGS. In terms of processing, the disulfide bond between PIGK/GPI8 and PIGT is important for normal enzyme activity.

The protein resides in the endoplasmic reticulum membrane. The protein operates within glycolipid biosynthesis; glycosylphosphatidylinositol-anchor biosynthesis. Its activity is regulated as follows. In the absence of proproteins substrates, exists in an inactive state with a disrupted catalytic site by an autoinhibitory loop. The binding of proprotein substrates, particularly the CSP region, to GPI-T triggers concerted conformational changes that alleviate the inhibition by the autoinhibitory loop. Meanwhile, proprotein residues near the omega- site induce the formation of a catalytic cleft for catalysis, following which the products are released and GPI-T reverts to the inactive state. In terms of biological role, catalytic subunit of the glycosylphosphatidylinositol-anchor (GPI-anchor) transamidase (GPI-T) complex that catalyzes the formation of the linkage between a proprotein and a GPI-anchor and participates in GPI anchored protein biosynthesis. Recognizes diverse proproteins at a C-terminal signal peptide (CSP) region that lacks consensus sequence and replaces it with a GPI-anchor via a transamidation reaction. Transamidation catalysis reaction follows a two-phase mechanism. In the acyl-enzyme phase, the carbonyl group of the proproteins's omega-site undergoes a nucleophilic attack forming an enzyme-substrate thioester bond. Followed by a general acid catalysis that allows CSP releasing, regenerating the carbonyl, and forming the acyl-enzyme intermediate. In the GPI-anchor attachment phase, the amino group of the GPI-anchor's ethanolamine phosphate, the one on third mannose (EtNP3), mediates a nucleophilic attack on the carbonyl of the acyl-enzyme intermediate, replacing the CSP, allowing GPI-anchor attachment to the omega-residue, therefore forming the product and freeing the enzyme. The polypeptide is GPI-anchor transamidase (Pongo abelii (Sumatran orangutan)).